The following is an 87-amino-acid chain: Chaperone NapD (87 aa).

The protein belongs to the NapD family. As to quaternary structure, interacts with the cytoplasmic NapA precursor.

Its subcellular location is the cytoplasm. Its function is as follows. Chaperone for NapA, the catalytic subunit of the periplasmic nitrate reductase. It binds directly and specifically to the twin-arginine signal peptide of NapA, preventing premature interaction with the Tat translocase and premature export. The polypeptide is Chaperone NapD (Escherichia coli O157:H7).